The chain runs to 164 residues: Peptidyl-prolyl cis-trans isomerase A (164 aa).

Residue M1 is modified to N-acetylmethionine. Position 2 is an N-acetylvaline; in Peptidyl-prolyl cis-trans isomerase A, N-terminally processed (V2). Residues 7-163 (FFDITADGEP…KKITISDCGQ (157 aa)) form the PPIase cyclophilin-type domain. At K28 the chain carries N6-acetyllysine; alternate. A Glycyl lysine isopeptide (Lys-Gly) (interchain with G-Cter in SUMO2); alternate cross-link involves residue K28. K28 is covalently cross-linked (Glycyl lysine isopeptide (Lys-Gly) (interchain with G-Cter in ubiquitin); alternate). 2 positions are modified to N6-acetyllysine: K44 and K76. Residue S77 is modified to Phosphoserine. K82 is subject to N6-acetyllysine; alternate. K82 is covalently cross-linked (Glycyl lysine isopeptide (Lys-Gly) (interchain with G-Cter in SUMO2); alternate). Residue T93 is modified to Phosphothreonine. N108 is a glycosylation site (N-linked (GlcNAc...) asparagine). Residues K125, K131, and K133 each carry the N6-acetyllysine modification.

Belongs to the cyclophilin-type PPIase family. PPIase A subfamily. Interacts with protein phosphatase PPP3CA/calcineurin A. Interacts with isoform 2 of BSG/CD147. Interacts with FOXO1; the interaction promotes FOXO1 dephosphorylation, nuclear accumulation and transcriptional activity. Interacts with integrin ITGA2B:ITGB3; the interaction is ROS and peptidyl-prolyl cis-trans isomerase (PPIase) activity-dependent and is increased in the presence of thrombin. Interacts with MAP3K5. Interacts with TARDBP; the interaction is dependent on the RNA-binding activity of TARDBP and the PPIase activity of PPIA/CYPA and the acetylation of PPIA/CYPA at Lys-125 favors the interaction. Interacts with HNRNPA1, HNRNPA2B1, HNRNPC, RBMX, HNRNPK and HNRNPM. Post-translationally, acetylation at Lys-125 markedly inhibits catalysis of cis to trans isomerization. PPIA acetylation also antagonizes the immunosuppressive effects of cyclosporine by inhibiting the sequential steps of cyclosporine binding and calcineurin inhibition. Acetylation at Lys-125 favors the interaction with TARDBP.

The protein resides in the cytoplasm. The protein localises to the secreted. It is found in the nucleus. The enzyme catalyses [protein]-peptidylproline (omega=180) = [protein]-peptidylproline (omega=0). Binds cyclosporin A (CsA). CsA mediates some of its effects via an inhibitory action on PPIase. Catalyzes the cis-trans isomerization of proline imidic peptide bonds in oligopeptides. Exerts a strong chemotactic effect on leukocytes partly through activation of one of its membrane receptors BSG/CD147, initiating a signaling cascade that culminates in MAPK/ERK activation. Activates endothelial cells (ECs) in a proinflammatory manner by stimulating activation of NF-kappa-B and ERK, JNK and p38 MAP-kinases and by inducing expression of adhesion molecules including SELE and VCAM1. Induces apoptosis in ECs by promoting the FOXO1-dependent expression of CCL2 and BCL2L11 which are involved in EC chemotaxis and apoptosis. In response to oxidative stress, initiates proapoptotic and antiapoptotic signaling in ECs via activation of NF-kappa-B and AKT1 and up-regulation of antiapoptotic protein BCL2. Negatively regulates MAP3K5/ASK1 kinase activity, autophosphorylation and oxidative stress-induced apoptosis mediated by MAP3K5/ASK1. Necessary for the assembly of TARDBP in heterogeneous nuclear ribonucleoprotein (hnRNP) complexes and regulates TARDBP binding to RNA UG repeats and TARDBP-dependent expression of HDAC6, ATG7 and VCP which are involved in clearance of protein aggregates. Plays an important role in platelet activation and aggregation. Regulates calcium mobilization and integrin ITGA2B:ITGB3 bidirectional signaling via increased ROS production as well as by facilitating the interaction between integrin and the cell cytoskeleton. Binds heparan sulfate glycosaminoglycans. In Rattus norvegicus (Rat), this protein is Peptidyl-prolyl cis-trans isomerase A (Ppia).